The chain runs to 389 residues: Phospho-N-acetylmuramoyl-pentapeptide-transferase (389 aa).

11 helical membrane-spanning segments follow: residues 25-45 (RAVM…PWVI), 74-94 (MGGV…CDWG), 97-117 (FIWV…VDDY), 134-154 (FFWQ…SVSE), 167-187 (WIEG…VPFF), 190-210 (VSYP…IVGS), 222-242 (GLVI…AYVM), 259-279 (AGEL…FLWF), 286-306 (VFMG…VAVI), 311-331 (IVLF…MLQV), and 366-386 (QVTV…LSSL).

It belongs to the glycosyltransferase 4 family. MraY subfamily. Mg(2+) serves as cofactor.

Its subcellular location is the cell inner membrane. The catalysed reaction is UDP-N-acetyl-alpha-D-muramoyl-L-alanyl-gamma-D-glutamyl-meso-2,6-diaminopimeloyl-D-alanyl-D-alanine + di-trans,octa-cis-undecaprenyl phosphate = di-trans,octa-cis-undecaprenyl diphospho-N-acetyl-alpha-D-muramoyl-L-alanyl-D-glutamyl-meso-2,6-diaminopimeloyl-D-alanyl-D-alanine + UMP. The protein operates within cell wall biogenesis; peptidoglycan biosynthesis. Catalyzes the initial step of the lipid cycle reactions in the biosynthesis of the cell wall peptidoglycan: transfers peptidoglycan precursor phospho-MurNAc-pentapeptide from UDP-MurNAc-pentapeptide onto the lipid carrier undecaprenyl phosphate, yielding undecaprenyl-pyrophosphoryl-MurNAc-pentapeptide, known as lipid I. The sequence is that of Phospho-N-acetylmuramoyl-pentapeptide-transferase from Cupriavidus metallidurans (strain ATCC 43123 / DSM 2839 / NBRC 102507 / CH34) (Ralstonia metallidurans).